The sequence spans 589 residues: Protein kinase G11A (589 aa).

The disordered stretch occupies residues 1 to 167 (MASKAMPRAP…SACSSISSVT (167 aa)). Polar residues-rich tracts occupy residues 15-36 (NLQSLKLCSQNDSSLETTSPSK), 46-55 (AESSKPNSEV), and 63-76 (TQHQNESIDLTGSN). Residues 91 to 100 (RLADEEKGVV) are compositionally biased toward basic and acidic residues. Residues 142 to 165 (SSSRCRPSTSSDVSDESACSSISS) are compositionally biased toward low complexity. One can recognise a Protein kinase domain in the interval 195-533 (FKLLKKLGCG…ATEIKQHPFF (339 aa)). Residues 201 to 209 (LGCGDIGSV) and Lys-224 contribute to the ATP site. Asp-320 (proton acceptor) is an active-site residue. A disordered region spans residues 551 to 589 (RPVEIERPPKQPVSTSEPAAAPSDAAQKSSDSYLEFDFF).

This sequence belongs to the protein kinase superfamily. Ser/Thr protein kinase family.

It catalyses the reaction L-seryl-[protein] + ATP = O-phospho-L-seryl-[protein] + ADP + H(+). The catalysed reaction is L-threonyl-[protein] + ATP = O-phospho-L-threonyl-[protein] + ADP + H(+). Its function is as follows. May play a role in the regulation of metabolism and signal transduction processes. The polypeptide is Protein kinase G11A (Oryza sativa subsp. indica (Rice)).